Consider the following 95-residue polypeptide: UPF0473 protein ABC1595 (95 aa).

It belongs to the UPF0473 family.

This chain is UPF0473 protein ABC1595, found in Shouchella clausii (strain KSM-K16) (Alkalihalobacillus clausii).